Here is a 1580-residue protein sequence, read N- to C-terminus: Ras GTPase-activating protein raskol (1580 aa).

A Phosphoserine modification is found at serine 164. Threonine 167 carries the post-translational modification Phosphothreonine. Residues 197–223 form a disordered region; it reads LKRTKSVTKLERTKRGSGGLRGSRSHE. 2 positions are modified to phosphoserine: serine 221 and serine 224. The PH domain maps to 233–291; the sequence is STIDLSCTGAVGVAPVHQSVLGRRHCFQVRGGPRGERYYSCGSRQERDLWIYSLRKSIA. Positions 282 to 400 constitute a C2 domain; that stretch reads WIYSLRKSIA…TSRLPCEQWY (119 aa). The region spanning 490–700 is the Ras-GAP domain; it reads GLAGAFLTDV…ARMQQFLEII (211 aa). Disordered stretches follow at residues 764–819, 857–892, 904–1023, 1112–1218, 1284–1313, 1334–1443, and 1561–1580; these read GMGT…QPQH, LLQQ…HQHP, AGNQ…SYDD, ANHH…QQFG, LSGG…YGRL, VGYG…LGKS, and YETQ…QKPQ. Residues 776-805 show a composition bias toward polar residues; the sequence is ATSSTHSIASENQENRNPGSSGSHAGSNSE. Composition is skewed to low complexity over residues 806-818, 857-885, and 926-939; these read QLLP…AQPQ, LLQQ…GHQQ, and SSSL…LLHG. The span at 940–954 shows a compositional bias: basic residues; that stretch reads HQQHAHHPQQLHPHH. A compositionally biased stretch (low complexity) spans 987–1020; the sequence is TSTPSSTRSRTLPRNGNPNANGNVGSSNNNQSGS. Over residues 1140–1150 the composition is skewed to polar residues; the sequence is SAKSSHCSSGY. Residues 1151–1169 show a composition bias toward low complexity; sequence QSISTNPSPSQSSSPVESQ. Phosphoserine is present on residues serine 1158 and serine 1164. Over residues 1186 to 1206 the composition is skewed to polar residues; the sequence is PSYQLQPQTGSSRSSAQSNTH. Composition is skewed to low complexity over residues 1207 to 1216, 1285 to 1299, and 1351 to 1362; these read QQQQQQQQQQ, SGGS…ASTS, and HQQQQNPMQQQQ. Positions 1363–1372 are enriched in basic and acidic residues; it reads QRERDQEHKQ. Low complexity predominate over residues 1374-1388; it reads AGSVAGSVGSATSAA. Positions 1396 to 1415 are enriched in polar residues; sequence SARTLSDSSTDTEGHCNQLQ. Serine 1401 and serine 1403 each carry phosphoserine. Positions 1427–1438 are enriched in gly residues; the sequence is GGSGGGGAGSEQ. Residues 1563–1580 show a composition bias toward low complexity; the sequence is TQQQQQQHQAPPKTQKPQ.

It localises to the cytoplasm. Its subcellular location is the cell membrane. It is found in the apical cell membrane. In terms of biological role, GTPase-activating protein, which acts as a negative regulator for some members of the Ras family. Probably decreases their signaling activity by stimulating their intrinsic GTPase activity, thereby lowering the levels of the GTP-bound active form. Functions with DE-cadherin (shg) to promote embryonic border cell (BC) migration and adhesion by regulating the distribution of actin protrusions in BCs. Promotes shg-mediated adhesion at the BC interfaces and likely maintains BC cluster adhesion during BC detachment from the follicular epithelium and subsequent BC migration. Also required for restricting the development of actin-rich protrusions to the front of migrating BC clusters thus ensuring unidirectional BC migration. Possibly functions by suppressing Rac1 signaling in non-leading BCs, thus limiting its activity to leading BCs where it initiates localized actin cytoskeleton remodeling to produce the polarized protrusions. This is Ras GTPase-activating protein raskol from Drosophila melanogaster (Fruit fly).